The following is a 304-amino-acid chain: Glutaminase (304 aa).

Positions 63, 114, 158, 165, 189, 240, and 258 each coordinate substrate.

It belongs to the glutaminase family. Homotetramer.

The catalysed reaction is L-glutamine + H2O = L-glutamate + NH4(+). In Shewanella amazonensis (strain ATCC BAA-1098 / SB2B), this protein is Glutaminase.